A 367-amino-acid polypeptide reads, in one-letter code: Phosphoribosylaminoimidazole-succinocarboxamide synthase (367 aa).

It belongs to the SAICAR synthetase family.

It catalyses the reaction 5-amino-1-(5-phospho-D-ribosyl)imidazole-4-carboxylate + L-aspartate + ATP = (2S)-2-[5-amino-1-(5-phospho-beta-D-ribosyl)imidazole-4-carboxamido]succinate + ADP + phosphate + 2 H(+). It participates in purine metabolism; IMP biosynthesis via de novo pathway; 5-amino-1-(5-phospho-D-ribosyl)imidazole-4-carboxamide from 5-amino-1-(5-phospho-D-ribosyl)imidazole-4-carboxylate: step 1/2. The polypeptide is Phosphoribosylaminoimidazole-succinocarboxamide synthase (Shewanella baltica (strain OS223)).